Reading from the N-terminus, the 368-residue chain is Glutamate 5-kinase (368 aa).

Residue Lys-10 participates in ATP binding. Residues Ser-50, Asp-137, and Asn-149 each contribute to the substrate site. Residue 169–170 (TD) participates in ATP binding. Residues 276-354 (RGTLVLDDGA…ESIVRELGYM (79 aa)) enclose the PUA domain.

Belongs to the glutamate 5-kinase family.

The protein localises to the cytoplasm. It catalyses the reaction L-glutamate + ATP = L-glutamyl 5-phosphate + ADP. Its pathway is amino-acid biosynthesis; L-proline biosynthesis; L-glutamate 5-semialdehyde from L-glutamate: step 1/2. Its function is as follows. Catalyzes the transfer of a phosphate group to glutamate to form L-glutamate 5-phosphate. This is Glutamate 5-kinase from Pseudomonas savastanoi pv. phaseolicola (strain 1448A / Race 6) (Pseudomonas syringae pv. phaseolicola (strain 1448A / Race 6)).